A 275-amino-acid chain; its full sequence is Nitrogenase iron protein 2 (275 aa).

9–16 (GKGGIGKS) serves as a coordination point for ATP. Cysteine 97 provides a ligand contact to [4Fe-4S] cluster. Arginine 100 carries the post-translational modification ADP-ribosylarginine; by dinitrogenase reductase ADP-ribosyltransferase. Position 132 (cysteine 132) interacts with [4Fe-4S] cluster.

Belongs to the NifH/BchL/ChlL family. As to quaternary structure, homodimer. [4Fe-4S] cluster serves as cofactor. In terms of processing, the reversible ADP-ribosylation of Arg-100 inactivates the nitrogenase reductase and regulates nitrogenase activity.

The catalysed reaction is N2 + 8 reduced [2Fe-2S]-[ferredoxin] + 16 ATP + 16 H2O = H2 + 8 oxidized [2Fe-2S]-[ferredoxin] + 2 NH4(+) + 16 ADP + 16 phosphate + 6 H(+). Its function is as follows. The key enzymatic reactions in nitrogen fixation are catalyzed by the nitrogenase complex, which has 2 components: the iron protein (component 2) and a component 1 which is either a molybdenum-iron protein, a vanadium-iron, or an iron-iron protein. This chain is Nitrogenase iron protein 2 (anfH), found in Rhodobacter capsulatus (Rhodopseudomonas capsulata).